A 296-amino-acid chain; its full sequence is Cytidine deaminase (296 aa).

CMP/dCMP-type deaminase domains lie at 47-167 (DSHE…FGPA) and 186-296 (ESDD…VDPV). Position 88–90 (88–90 (NLE)) interacts with substrate. Histidine 101 is a binding site for Zn(2+). Glutamate 103 functions as the Proton donor in the catalytic mechanism. Zn(2+)-binding residues include cysteine 128 and cysteine 131.

This sequence belongs to the cytidine and deoxycytidylate deaminase family. As to quaternary structure, homodimer. Zn(2+) is required as a cofactor.

The catalysed reaction is cytidine + H2O + H(+) = uridine + NH4(+). It carries out the reaction 2'-deoxycytidine + H2O + H(+) = 2'-deoxyuridine + NH4(+). Its function is as follows. This enzyme scavenges exogenous and endogenous cytidine and 2'-deoxycytidine for UMP synthesis. This chain is Cytidine deaminase, found in Shewanella amazonensis (strain ATCC BAA-1098 / SB2B).